We begin with the raw amino-acid sequence, 273 residues long: Type IV secretion system protein PtlF homolog (273 aa).

Positions 1–20 (MMAARMMAAGLAATALSAHA) are cleaved as a signal peptide.

The protein belongs to the TrbG/VirB9 family.

It is found in the cell outer membrane. The chain is Type IV secretion system protein PtlF homolog (ptlF) from Bordetella bronchiseptica (strain ATCC BAA-588 / NCTC 13252 / RB50) (Alcaligenes bronchisepticus).